The sequence spans 305 residues: Glycine--tRNA ligase alpha subunit (305 aa).

The protein belongs to the class-II aminoacyl-tRNA synthetase family. Tetramer of two alpha and two beta subunits.

It is found in the cytoplasm. The catalysed reaction is tRNA(Gly) + glycine + ATP = glycyl-tRNA(Gly) + AMP + diphosphate. This chain is Glycine--tRNA ligase alpha subunit, found in Vibrio campbellii (strain ATCC BAA-1116).